The primary structure comprises 266 residues: Putative carbamate hydrolase RutD (266 aa).

This sequence belongs to the AB hydrolase superfamily. Hydrolase RutD family.

It catalyses the reaction carbamate + 2 H(+) = NH4(+) + CO2. Functionally, involved in pyrimidine catabolism. May facilitate the hydrolysis of carbamate, a reaction that can also occur spontaneously. The chain is Putative carbamate hydrolase RutD from Enterobacter cloacae subsp. cloacae (strain ATCC 13047 / DSM 30054 / NBRC 13535 / NCTC 10005 / WDCM 00083 / NCDC 279-56).